A 101-amino-acid polypeptide reads, in one-letter code: NADH-quinone oxidoreductase subunit K (101 aa).

Transmembrane regions (helical) follow at residues 4 to 24, 30 to 50, and 62 to 82; these read LGHMLALGAVLFAISLAGIFL, IVLLMSIELMLLSVNVNFVAF, and FVFFILTVAAAEAAIGLAILV.

The protein belongs to the complex I subunit 4L family. In terms of assembly, NDH-1 is composed of 14 different subunits. Subunits NuoA, H, J, K, L, M, N constitute the membrane sector of the complex.

The protein localises to the cell inner membrane. The catalysed reaction is a quinone + NADH + 5 H(+)(in) = a quinol + NAD(+) + 4 H(+)(out). Its function is as follows. NDH-1 shuttles electrons from NADH, via FMN and iron-sulfur (Fe-S) centers, to quinones in the respiratory chain. The immediate electron acceptor for the enzyme in this species is believed to be ubiquinone. Couples the redox reaction to proton translocation (for every two electrons transferred, four hydrogen ions are translocated across the cytoplasmic membrane), and thus conserves the redox energy in a proton gradient. The protein is NADH-quinone oxidoreductase subunit K of Stenotrophomonas maltophilia (strain R551-3).